The chain runs to 376 residues: Chaperone protein DnaJ (376 aa).

The 66-residue stretch at 5-70 folds into the J domain; it reads DYYEILGVSK…QKRAAYDQYG (66 aa). Residues 131 to 209 form a CR-type zinc finger; the sequence is GVTKEIRIPT…CHGHGRVERS (79 aa). Zn(2+) is bound by residues Cys-144, Cys-147, Cys-161, Cys-164, Cys-183, Cys-186, Cys-197, and Cys-200. 4 CXXCXGXG motif repeats span residues 144-151, 161-168, 183-190, and 197-204; these read CDVCHGSG, CPTCHGSG, CPHCQGRG, and CNKCHGHG.

The protein belongs to the DnaJ family. Homodimer. Zn(2+) is required as a cofactor.

The protein resides in the cytoplasm. Its function is as follows. Participates actively in the response to hyperosmotic and heat shock by preventing the aggregation of stress-denatured proteins and by disaggregating proteins, also in an autonomous, DnaK-independent fashion. Unfolded proteins bind initially to DnaJ; upon interaction with the DnaJ-bound protein, DnaK hydrolyzes its bound ATP, resulting in the formation of a stable complex. GrpE releases ADP from DnaK; ATP binding to DnaK triggers the release of the substrate protein, thus completing the reaction cycle. Several rounds of ATP-dependent interactions between DnaJ, DnaK and GrpE are required for fully efficient folding. Also involved, together with DnaK and GrpE, in the DNA replication of plasmids through activation of initiation proteins. The polypeptide is Chaperone protein DnaJ (Escherichia coli (strain K12 / DH10B)).